A 535-amino-acid chain; its full sequence is Keratin, type II cytoskeletal 79 (535 aa).

Polar residues predominate over residues M1 to T12. A disordered region spans residues M1 to P52. The head stretch occupies residues M1–Q141. The segment covering S32–S42 has biased composition (low complexity). Residues G43–P52 are compositionally biased toward gly residues. The segment at E142 to L177 is coil 1A. The IF rod domain occupies E142–M457. The interval Q178–Y198 is linker 1. The coil 1B stretch occupies residues L199 to V290. The tract at residues Q291–I314 is linker 12. A coil 2 region spans residues I315–E453. Positions E454–Y535 are tail.

This sequence belongs to the intermediate filament family. Heterotetramer of two type I and two type II keratins. As to expression, expressed in skeletal muscle, skin and scalp, but not in any other tissues or organs examined.

The sequence is that of Keratin, type II cytoskeletal 79 (KRT79) from Homo sapiens (Human).